Consider the following 129-residue polypeptide: Small ribosomal subunit protein eS8 (129 aa).

Positions 1–29 are disordered; it reads MSVWQGRSRRKPTGGLYRPARKKRKYEMG.

It belongs to the eukaryotic ribosomal protein eS8 family. As to quaternary structure, part of the 30S ribosomal subunit.

This Methanocaldococcus jannaschii (strain ATCC 43067 / DSM 2661 / JAL-1 / JCM 10045 / NBRC 100440) (Methanococcus jannaschii) protein is Small ribosomal subunit protein eS8 (rps8e).